The following is a 236-amino-acid chain: MSYNLTDPYEIARYIKEAKKSTPIKAYIEGDLSNCDFTNIEKFNSGDLYILFGESEEILVIIEKNKDKIKNCRIEQDRRKSAIPLLDMLKINARIEPGATIRDKVIIGENAVIMMGAVVNIGAEIGEGTMVDMNAVVGARGKLGKNVHLGAGAVVAGVLEPPSSDPCTIEDNVLIGANAVILEGIKIGKGSVVAAGSIVTTDVPENVVVAGAPAKIIKEVDVKTKDKTKLLDDLRK.

This sequence belongs to the transferase hexapeptide repeat family. DapH subfamily.

The enzyme catalyses (S)-2,3,4,5-tetrahydrodipicolinate + acetyl-CoA + H2O = L-2-acetamido-6-oxoheptanedioate + CoA. It functions in the pathway amino-acid biosynthesis; L-lysine biosynthesis via DAP pathway; LL-2,6-diaminopimelate from (S)-tetrahydrodipicolinate (acetylase route): step 1/3. Catalyzes the transfer of an acetyl group from acetyl-CoA to tetrahydrodipicolinate. The protein is 2,3,4,5-tetrahydropyridine-2,6-dicarboxylate N-acetyltransferase of Clostridium botulinum (strain Kyoto / Type A2).